We begin with the raw amino-acid sequence, 121 residues long: Large ribosomal subunit protein bL12 (121 aa).

Belongs to the bacterial ribosomal protein bL12 family. Homodimer. Part of the ribosomal stalk of the 50S ribosomal subunit. Forms a multimeric L10(L12)X complex, where L10 forms an elongated spine to which 2 to 4 L12 dimers bind in a sequential fashion. Binds GTP-bound translation factors.

Forms part of the ribosomal stalk which helps the ribosome interact with GTP-bound translation factors. Is thus essential for accurate translation. This Limosilactobacillus fermentum (strain NBRC 3956 / LMG 18251) (Lactobacillus fermentum) protein is Large ribosomal subunit protein bL12.